A 468-amino-acid polypeptide reads, in one-letter code: Na(+)/H(+) antiporter NhaA (468 aa).

The next 10 helical transmembrane spans lie at 32–52, 83–103, 119–139, 148–168, 178–198, 205–225, 320–340, 354–374, 397–417, and 428–448; these read FLHI…IALL, LHFW…GMEI, ALPM…YLAI, GWAV…ALLG, FLLA…AVAF, GGFL…WIGV, ALHP…NAGV, GAMF…IVSV, LVGL…TLAF, and LGVL…GFIY.

Belongs to the NhaA Na(+)/H(+) (TC 2.A.33) antiporter family.

It localises to the cell inner membrane. It catalyses the reaction Na(+)(in) + 2 H(+)(out) = Na(+)(out) + 2 H(+)(in). Its function is as follows. Na(+)/H(+) antiporter that extrudes sodium in exchange for external protons. The protein is Na(+)/H(+) antiporter NhaA of Cupriavidus necator (strain ATCC 17699 / DSM 428 / KCTC 22496 / NCIMB 10442 / H16 / Stanier 337) (Ralstonia eutropha).